The following is a 207-amino-acid chain: Large ribosomal subunit protein uL4 (207 aa).

The interval 47–78 (GTHKVKNRSEVRGGGRKPWRQKGTGRARQGSI) is disordered. Over residues 60–71 (GGRKPWRQKGTG) the composition is skewed to basic residues.

This sequence belongs to the universal ribosomal protein uL4 family. Part of the 50S ribosomal subunit.

Its function is as follows. One of the primary rRNA binding proteins, this protein initially binds near the 5'-end of the 23S rRNA. It is important during the early stages of 50S assembly. It makes multiple contacts with different domains of the 23S rRNA in the assembled 50S subunit and ribosome. In terms of biological role, forms part of the polypeptide exit tunnel. The protein is Large ribosomal subunit protein uL4 of Listeria innocua serovar 6a (strain ATCC BAA-680 / CLIP 11262).